The primary structure comprises 645 residues: MPQKAQPQPRESPFKPARQQPGLACEECRKRKARCDRAKPQCGSCMMTGRVCVVNHNRPRRGPKKGQIESLYSRLGRFIHGSLCISCWKAGMLTVTEVLEEQVIEQMEHIYHPDFEPNSHPRHSQSHDRRQQSGPDSSPDTQHELPFLQSPPAARDADSAERALLPSPVSPVRAMTAQELSYARTGSNPTQNPGLDLILADLDQLYFDRVHPIAPFLHQQRHLSQREAESSVLARACLRSAMRTVAAAMSAQYRRFADSLYIETSRVVQELDTIERTPSLKQIQAVLLLAHYELLRMEENRALATVGRCFRLIQLARLQDTDPSTDAGAGRDFVKEEETRRTFWVAYCFDRFLTSRNEWPFTLQEEAIWIRLPVSESAFQIPRPPEQPMDYLHEAIASSGQKTLPPFAEYIVLATLHGRTMNLRRSALLLSTSTEASMFWERHRALSDIVEKRSALWSYSPSATTPLVTADPLTAFTCLLEKTLIIYLGKVGQTAREQLGGMSERRLIENANSAVQNLATSEQETLMNCHSHSRSFDIGTGGRGGHASGGLQRSAQTAAEFVALAKFMCPVNCFRICSDKSVRRLTLSFQMQYPAQQSFLLRMEMPPRLEKYGMNVGERGTGRIRAIDHASRLKVDERRAVRAYL.

The segment at 1-21 is disordered; that stretch reads MPQKAQPQPRESPFKPARQQP. The segment at residues 25-52 is a DNA-binding region (zn(2)-C6 fungal-type); sequence CEECRKRKARCDRAKPQCGSCMMTGRVC. The segment covering 113–131 has biased composition (basic and acidic residues); that stretch reads PDFEPNSHPRHSQSHDRRQ. Positions 113–170 are disordered; it reads PDFEPNSHPRHSQSHDRRQQSGPDSSPDTQHELPFLQSPPAARDADSAERALLPSPVS.

The protein resides in the nucleus. Functionally, transcription factors AN6788 and AN6790 act in tandem to regulate the expression of the non-reducing polyketide synthase pkfA from the aspernidine A biosynthesis cluster. They do not control the expression of the other genes involved in aspernidine A biosynthesis, nor do they regulate the expression of the highly reducing polyketide synthase AN6791 and the esterase AN6793 with which they are predicted to form a secondary metabolite biosynthesis cluster. In Emericella nidulans (strain FGSC A4 / ATCC 38163 / CBS 112.46 / NRRL 194 / M139) (Aspergillus nidulans), this protein is Transcription factor AN6788.